The following is a 697-amino-acid chain: Phosphate acetyltransferase (697 aa).

Positions 374–697 (LFLYNLVQAA…TVVITALQVK (324 aa)) are phosphate acetyltransferase.

This sequence in the N-terminal section; belongs to the CobB/CobQ family. The protein in the C-terminal section; belongs to the phosphate acetyltransferase and butyryltransferase family.

Its subcellular location is the cytoplasm. It carries out the reaction acetyl-CoA + phosphate = acetyl phosphate + CoA. Its pathway is metabolic intermediate biosynthesis; acetyl-CoA biosynthesis; acetyl-CoA from acetate: step 2/2. Functionally, involved in acetate metabolism. This is Phosphate acetyltransferase (pta) from Synechocystis sp. (strain ATCC 27184 / PCC 6803 / Kazusa).